Consider the following 323-residue polypeptide: NADH-cytochrome b5 reductase 2 (323 aa).

A helical membrane pass occupies residues 30 to 46 (LAPIYTAVGLTGLSVGL). Positions 72–177 (QGWVDLKLSE…KGPLPKYQWE (106 aa)) constitute an FAD-binding FR-type domain. Position 180-215 (180-215 (KHEHIALIAGGTGITPMYQLIRQIFKNPDDKTKVTL)) interacts with FAD.

Belongs to the flavoprotein pyridine nucleotide cytochrome reductase family. It depends on FAD as a cofactor.

It is found in the mitochondrion outer membrane. It carries out the reaction 2 Fe(III)-[cytochrome b5] + NADH = 2 Fe(II)-[cytochrome b5] + NAD(+) + H(+). May mediate the reduction of outer membrane cytochrome b5. This Aspergillus oryzae (strain ATCC 42149 / RIB 40) (Yellow koji mold) protein is NADH-cytochrome b5 reductase 2 (mcr1).